We begin with the raw amino-acid sequence, 220 residues long: uncharacterized protein (220 aa).

A helical transmembrane segment spans residues 20 to 42 (FFKKLVPIIIIISIVVITIMVII).

The protein localises to the membrane. This is an uncharacterized protein from Rickettsia prowazekii (strain Madrid E).